The sequence spans 235 residues: UPF0173 metal-dependent hydrolase mll0680 (235 aa).

It belongs to the UPF0173 family.

The polypeptide is UPF0173 metal-dependent hydrolase mll0680 (Mesorhizobium japonicum (strain LMG 29417 / CECT 9101 / MAFF 303099) (Mesorhizobium loti (strain MAFF 303099))).